The chain runs to 473 residues: Photosystem II CP43 reaction center protein (473 aa).

The propeptide occupies 1-14 (MKTLYSLRRFYHVE). An N-acetylthreonine modification is found at T15. Phosphothreonine is present on T15. 5 consecutive transmembrane segments (helical) span residues 69–93 (LFEV…PHLA), 134–155 (LLGP…KDRN), 178–200 (KALY…RKIT), 255–275 (KPFA…LSYS), and 291–312 (WFNN…ASQA). E367 serves as a coordination point for [CaMn4O5] cluster. Residues 447–471 (RARAAAAGFEKGIDRDFEPVLSMTP) traverse the membrane as a helical segment.

This sequence belongs to the PsbB/PsbC family. PsbC subfamily. As to quaternary structure, PSII is composed of 1 copy each of membrane proteins PsbA, PsbB, PsbC, PsbD, PsbE, PsbF, PsbH, PsbI, PsbJ, PsbK, PsbL, PsbM, PsbT, PsbX, PsbY, PsbZ, Psb30/Ycf12, at least 3 peripheral proteins of the oxygen-evolving complex and a large number of cofactors. It forms dimeric complexes. The cofactor is Binds multiple chlorophylls and provides some of the ligands for the Ca-4Mn-5O cluster of the oxygen-evolving complex. It may also provide a ligand for a Cl- that is required for oxygen evolution. PSII binds additional chlorophylls, carotenoids and specific lipids..

The protein resides in the plastid. It localises to the chloroplast thylakoid membrane. In terms of biological role, one of the components of the core complex of photosystem II (PSII). It binds chlorophyll and helps catalyze the primary light-induced photochemical processes of PSII. PSII is a light-driven water:plastoquinone oxidoreductase, using light energy to abstract electrons from H(2)O, generating O(2) and a proton gradient subsequently used for ATP formation. The protein is Photosystem II CP43 reaction center protein of Crucihimalaya wallichii (Rock-cress).